Consider the following 492-residue polypeptide: Glutamyl-tRNA(Gln) amidotransferase subunit A (492 aa).

Catalysis depends on charge relay system residues Lys-84 and Ser-159. Residue Ser-183 is the Acyl-ester intermediate of the active site.

The protein belongs to the amidase family. GatA subfamily. In terms of assembly, heterotrimer of A, B and C subunits.

The enzyme catalyses L-glutamyl-tRNA(Gln) + L-glutamine + ATP + H2O = L-glutaminyl-tRNA(Gln) + L-glutamate + ADP + phosphate + H(+). In terms of biological role, allows the formation of correctly charged Gln-tRNA(Gln) through the transamidation of misacylated Glu-tRNA(Gln) in organisms which lack glutaminyl-tRNA synthetase. The reaction takes place in the presence of glutamine and ATP through an activated gamma-phospho-Glu-tRNA(Gln). In Anaeromyxobacter sp. (strain K), this protein is Glutamyl-tRNA(Gln) amidotransferase subunit A.